Reading from the N-terminus, the 210-residue chain is Riboflavin kinase (210 aa).

Residues 1-81 (MECKERRLIG…DLLRYFNIAS (81 aa)) are H-T-H motif-like. The tract at residues 82 to 210 (IRLIGRVISG…GDIVEVEILL (129 aa)) is riboflavin kinase. Residue 91-96 (GLGEGA) participates in CDP binding. The Mg(2+) site is built by Thr-120 and Asn-122. Residues Thr-177 and Glu-185 each coordinate FMN. 190–193 (VKLR) contacts CDP.

It belongs to the archaeal riboflavin kinase family. The cofactor is Mg(2+).

It carries out the reaction riboflavin + CTP = CDP + FMN + H(+). The protein operates within cofactor biosynthesis; FMN biosynthesis; FMN from riboflavin (CTP route): step 1/1. Catalyzes the CTP-dependent phosphorylation of riboflavin (vitamin B2) to form flavin mononucleotide (FMN). This is Riboflavin kinase (ribK) from Pyrobaculum aerophilum (strain ATCC 51768 / DSM 7523 / JCM 9630 / CIP 104966 / NBRC 100827 / IM2).